Consider the following 432-residue polypeptide: Enolase 1 (432 aa).

Gln163 serves as a coordination point for (2R)-2-phosphoglycerate. Glu205 (proton donor) is an active-site residue. Positions 242, 287, and 314 each coordinate Mg(2+). Residues Lys339, Arg368, Ser369, and Lys390 each contribute to the (2R)-2-phosphoglycerate site. Lys339 serves as the catalytic Proton acceptor.

It belongs to the enolase family. Mg(2+) is required as a cofactor.

Its subcellular location is the cytoplasm. It is found in the secreted. The protein resides in the cell surface. The enzyme catalyses (2R)-2-phosphoglycerate = phosphoenolpyruvate + H2O. Its pathway is carbohydrate degradation; glycolysis; pyruvate from D-glyceraldehyde 3-phosphate: step 4/5. Catalyzes the reversible conversion of 2-phosphoglycerate (2-PG) into phosphoenolpyruvate (PEP). It is essential for the degradation of carbohydrates via glycolysis. The protein is Enolase 1 of Lactobacillus johnsonii (strain CNCM I-12250 / La1 / NCC 533).